Reading from the N-terminus, the 261-residue chain is Zinc import ATP-binding protein ZnuC (261 aa).

Residues Ile-5–Ala-220 form the ABC transporter domain. Residue Gly-37–Ser-44 participates in ATP binding. The interval His-236–Asp-261 is disordered. The span at Asn-252–Asp-261 shows a compositional bias: basic residues.

Belongs to the ABC transporter superfamily. Zinc importer (TC 3.A.1.15.5) family. In terms of assembly, the complex is composed of two ATP-binding proteins (ZnuC), two transmembrane proteins (ZnuB) and a solute-binding protein (ZnuA).

The protein resides in the cell inner membrane. It carries out the reaction Zn(2+)(out) + ATP(in) + H2O(in) = Zn(2+)(in) + ADP(in) + phosphate(in) + H(+)(in). In terms of biological role, part of the ABC transporter complex ZnuABC involved in zinc import. Responsible for energy coupling to the transport system. The polypeptide is Zinc import ATP-binding protein ZnuC (Vibrio vulnificus (strain CMCP6)).